A 197-amino-acid polypeptide reads, in one-letter code: MFRNSDFDIFEDKTLNGRMEKIRTIIDPKFEEFASIALPILNTNGQEWYAHVAKHLRRTTYAPDNTWVAFAPNKRGYKMLPHFELGIWEDNVYFYLAVEENMKPDQTNVITQKLREVSPLVRELPDSYRLSQDHMVNKTYSLLQYDDSIERYESVKHSEVLIGVEIKRGDKLWDGDGIVDTLVLAMKNLLPIYEKIK.

It belongs to the UPF0637 family.

This chain is UPF0637 protein LEUM_0496, found in Leuconostoc mesenteroides subsp. mesenteroides (strain ATCC 8293 / DSM 20343 / BCRC 11652 / CCM 1803 / JCM 6124 / NCDO 523 / NBRC 100496 / NCIMB 8023 / NCTC 12954 / NRRL B-1118 / 37Y).